The primary structure comprises 248 residues: Ubiquinone/menaquinone biosynthesis C-methyltransferase UbiE (248 aa).

S-adenosyl-L-methionine is bound by residues Ser68, Asp92, and 120–121 (NA).

The protein belongs to the class I-like SAM-binding methyltransferase superfamily. MenG/UbiE family.

The catalysed reaction is a 2-demethylmenaquinol + S-adenosyl-L-methionine = a menaquinol + S-adenosyl-L-homocysteine + H(+). It carries out the reaction a 2-methoxy-6-(all-trans-polyprenyl)benzene-1,4-diol + S-adenosyl-L-methionine = a 5-methoxy-2-methyl-3-(all-trans-polyprenyl)benzene-1,4-diol + S-adenosyl-L-homocysteine + H(+). It functions in the pathway quinol/quinone metabolism; menaquinone biosynthesis; menaquinol from 1,4-dihydroxy-2-naphthoate: step 2/2. Its pathway is cofactor biosynthesis; ubiquinone biosynthesis. Functionally, methyltransferase required for the conversion of demethylmenaquinol (DMKH2) to menaquinol (MKH2) and the conversion of 2-polyprenyl-6-methoxy-1,4-benzoquinol (DDMQH2) to 2-polyprenyl-3-methyl-6-methoxy-1,4-benzoquinol (DMQH2). In Rickettsia prowazekii (strain Madrid E), this protein is Ubiquinone/menaquinone biosynthesis C-methyltransferase UbiE.